We begin with the raw amino-acid sequence, 181 residues long: Ankyrin repeat-containing protein YGL242C (181 aa).

An N-acetylmethionine modification is found at Met-1. ANK repeat units lie at residues Leu-49–Ile-78 and Asp-85–Val-120. Positions Ile-151–Lys-181 are disordered. Acidic residues predominate over residues Asn-160 to Lys-181. Phosphoserine is present on Ser-172.

This Saccharomyces cerevisiae (strain ATCC 204508 / S288c) (Baker's yeast) protein is Ankyrin repeat-containing protein YGL242C.